We begin with the raw amino-acid sequence, 169 residues long: MKPSSSNSRSKGHAKARRKTREELDQEARDRKRQKKRRGHAPGSRAAGGNTSSGSKGQNAPKDPRIGSKTPIPLGVTEKVTKQHKPKSEKPMLSPQAELELLETDERLDALLERLEAGETLSAEEQSWVDAKLDRIDELMQKLGLSYDDDEEEEEDEKQEDMMRLLRGN.

Disordered stretches follow at residues 1–100 (MKPS…AELE) and 144–169 (GLSY…LRGN). Positions 10 to 19 (SKGHAKARRK) are enriched in basic residues. Positions 20-30 (TREELDQEARD) are enriched in basic and acidic residues. Positions 31–40 (RKRQKKRRGH) are enriched in basic residues. The segment covering 49-58 (GNTSSGSKGQ) has biased composition (polar residues). Positions 147-159 (YDDDEEEEEDEKQ) are enriched in acidic residues. Basic and acidic residues predominate over residues 160–169 (EDMMRLLRGN).

This sequence belongs to the YihI family. In terms of assembly, interacts with Der.

Functionally, a GTPase-activating protein (GAP) that modifies Der/EngA GTPase function. May play a role in ribosome biogenesis. The polypeptide is Der GTPase-activating protein YihI (Escherichia coli (strain SMS-3-5 / SECEC)).